The chain runs to 407 residues: uncharacterized protein (407 aa).

Disordered stretches follow at residues 1–64 (MSRK…EPFD), 110–276 (GFGP…YPQF), and 314–341 (QSRPRKSSHDRHKHHNKHKHHNGHHNNP). Positions 7–32 (KQSNPKRNYKNDNYFQENSYTMTNGF) are enriched in polar residues. Basic and acidic residues predominate over residues 33 to 44 (TKDKDGKPVEFK). A compositionally biased stretch (acidic residues) spans 122–137 (DSDSEYSDECLTDECS). Composition is skewed to polar residues over residues 138–147 (DNYNKQSTDS) and 184–201 (NFDNTVPIPQNDTTNSQP). Low complexity predominate over residues 209–231 (SKSSSKSSKSNKSNKSSKSNKSS). The span at 232-246 (KSSKSKSNKHSKHKN) shows a compositional bias: basic residues. A compositionally biased stretch (basic and acidic residues) spans 247-258 (KSDSSSDSDEKT). Basic residues-rich tracts occupy residues 259–270 (HKHKDRRHRRGR) and 316–341 (RPRKSSHDRHKHHNKHKHHNGHHNNP).

This is an uncharacterized protein from Acanthamoeba polyphaga mimivirus (APMV).